The chain runs to 834 residues: Periplasmic nitrate reductase (834 aa).

A signal peptide (tat-type signal) is located at residues 1 to 29 (MKLSRREFAKANAAAIAAAAAGLPLASTA). The 4Fe-4S Mo/W bis-MGD-type domain maps to 41–97 (LDWNKAPCRFCGTGCSVMVATRDNRVVATHGDVKAEVNRGLNCVKGYFLSKIMYGVD). Cys-48, Cys-51, Cys-55, and Cys-83 together coordinate [4Fe-4S] cluster. Mo-bis(molybdopterin guanine dinucleotide)-binding positions include Lys-85, Gln-152, Asn-177, Cys-181, 214 to 221 (WGSNMAEM), 245 to 249 (STFEH), 264 to 266 (QTD), Met-375, Gln-379, Asn-485, 511 to 512 (SD), Lys-534, Asp-561, and 721 to 730 (TGRVLEHWHT). Position 797 (Phe-797) interacts with substrate. The Mo-bis(molybdopterin guanine dinucleotide) site is built by Asn-805 and Lys-822.

The protein belongs to the prokaryotic molybdopterin-containing oxidoreductase family. NasA/NapA/NarB subfamily. As to quaternary structure, component of the periplasmic nitrate reductase NapAB complex composed of NapA and NapB. Requires [4Fe-4S] cluster as cofactor. Mo-bis(molybdopterin guanine dinucleotide) is required as a cofactor. Post-translationally, predicted to be exported by the Tat system. The position of the signal peptide cleavage has not been experimentally proven.

It is found in the periplasm. The enzyme catalyses 2 Fe(II)-[cytochrome] + nitrate + 2 H(+) = 2 Fe(III)-[cytochrome] + nitrite + H2O. Its function is as follows. Catalytic subunit of the periplasmic nitrate reductase complex NapAB. Receives electrons from NapB and catalyzes the reduction of nitrate to nitrite. The protein is Periplasmic nitrate reductase of Ectopseudomonas mendocina (strain ymp) (Pseudomonas mendocina).